Consider the following 132-residue polypeptide: Small ribosomal subunit protein uS9 (132 aa).

This sequence belongs to the universal ribosomal protein uS9 family.

This is Small ribosomal subunit protein uS9 from Baumannia cicadellinicola subsp. Homalodisca coagulata.